Consider the following 210-residue polypeptide: Proteasome subunit beta (210 aa).

A propeptide spans 1-7 (MEVLKTG) (removed in mature form; by autocatalysis). Thr-8 serves as the catalytic Nucleophile.

Belongs to the peptidase T1B family. As to quaternary structure, the 20S proteasome core is composed of 14 alpha and 14 beta subunits that assemble into four stacked heptameric rings, resulting in a barrel-shaped structure. The two inner rings, each composed of seven catalytic beta subunits, are sandwiched by two outer rings, each composed of seven alpha subunits. The catalytic chamber with the active sites is on the inside of the barrel. Has a gated structure, the ends of the cylinder being occluded by the N-termini of the alpha-subunits. Is capped at one or both ends by the proteasome regulatory ATPase, PAN.

The protein localises to the cytoplasm. The catalysed reaction is Cleavage of peptide bonds with very broad specificity.. The formation of the proteasomal ATPase PAN-20S proteasome complex, via the docking of the C-termini of PAN into the intersubunit pockets in the alpha-rings, triggers opening of the gate for substrate entry. Interconversion between the open-gate and close-gate conformations leads to a dynamic regulation of the 20S proteasome proteolysis activity. Its function is as follows. Component of the proteasome core, a large protease complex with broad specificity involved in protein degradation. In Picrophilus torridus (strain ATCC 700027 / DSM 9790 / JCM 10055 / NBRC 100828 / KAW 2/3), this protein is Proteasome subunit beta.